The following is a 39-amino-acid chain: Gonadal protein gdl-ORF39 (39 aa).

As to expression, in bundles of maturing sperm of larval, pupal and adult males.

The sequence is that of Gonadal protein gdl-ORF39 (gdl-ORF39) from Drosophila melanogaster (Fruit fly).